The sequence spans 102 residues: Urease subunit beta (102 aa).

Belongs to the urease beta subunit family. Heterotrimer of UreA (gamma), UreB (beta) and UreC (alpha) subunits. Three heterotrimers associate to form the active enzyme.

The protein resides in the cytoplasm. It catalyses the reaction urea + 2 H2O + H(+) = hydrogencarbonate + 2 NH4(+). It participates in nitrogen metabolism; urea degradation; CO(2) and NH(3) from urea (urease route): step 1/1. The protein is Urease subunit beta of Clostridium perfringens.